Consider the following 161-residue polypeptide: DNA-directed RNA polymerase 18 kDa subunit (161 aa).

This sequence belongs to the poxviridae DNA-directed RNA polymerase 18 kDa subunit family. The DNA-dependent RNA polymerase used for intermediate and late genes expression consists of eight subunits Rpo30/OPG66, Rpo7/OPG90, Rpo22/OPG103, Rpo147/OPG105, Rpo18/OPG119, Rpo19/OPG131, Rpo132/OPG151 and Rpo35/OPG156. The same holoenzyme, with the addition of the transcription-specificity factor OPG109, is used for early gene expression.

The protein localises to the virion. The enzyme catalyses RNA(n) + a ribonucleoside 5'-triphosphate = RNA(n+1) + diphosphate. Part of the DNA-dependent RNA polymerase which catalyzes the transcription of viral DNA into RNA using the four ribonucleoside triphosphates as substrates. Responsible for the transcription of early, intermediate and late genes. DNA-dependent RNA polymerase associates with the early transcription factor (ETF), itself composed of OPG118 and OPG133, thereby allowing the early genes transcription. Late transcription, and probably also intermediate transcription, require newly synthesized RNA polymerase. This Vaccinia virus (strain Copenhagen) (VACV) protein is DNA-directed RNA polymerase 18 kDa subunit (OPG119).